The chain runs to 450 residues: UDP-N-acetylmuramoylalanine--D-glutamate ligase (450 aa).

118 to 124 serves as a coordination point for ATP; sequence GSNAKST.

Belongs to the MurCDEF family.

Its subcellular location is the cytoplasm. The enzyme catalyses UDP-N-acetyl-alpha-D-muramoyl-L-alanine + D-glutamate + ATP = UDP-N-acetyl-alpha-D-muramoyl-L-alanyl-D-glutamate + ADP + phosphate + H(+). The protein operates within cell wall biogenesis; peptidoglycan biosynthesis. Functionally, cell wall formation. Catalyzes the addition of glutamate to the nucleotide precursor UDP-N-acetylmuramoyl-L-alanine (UMA). The polypeptide is UDP-N-acetylmuramoylalanine--D-glutamate ligase (Pseudomonas putida (strain ATCC 47054 / DSM 6125 / CFBP 8728 / NCIMB 11950 / KT2440)).